We begin with the raw amino-acid sequence, 303 residues long: Imidazoleglycerol-phosphate dehydratase (303 aa).

Belongs to the imidazoleglycerol-phosphate dehydratase family.

The protein resides in the cytoplasm. The catalysed reaction is D-erythro-1-(imidazol-4-yl)glycerol 3-phosphate = 3-(imidazol-4-yl)-2-oxopropyl phosphate + H2O. The protein operates within amino-acid biosynthesis; L-histidine biosynthesis; L-histidine from 5-phospho-alpha-D-ribose 1-diphosphate: step 6/9. This is Imidazoleglycerol-phosphate dehydratase from Neisseria gonorrhoeae (strain ATCC 700825 / FA 1090).